The chain runs to 388 residues: N5-carboxyaminoimidazole ribonucleotide synthase (388 aa).

Residues K105, K140, E174 to V177, E182, and N267 to E268 each bind ATP. Residues R109–T297 form the ATP-grasp domain.

The protein belongs to the PurK/PurT family. In terms of assembly, homodimer.

It catalyses the reaction 5-amino-1-(5-phospho-beta-D-ribosyl)imidazole + hydrogencarbonate + ATP = 5-carboxyamino-1-(5-phospho-D-ribosyl)imidazole + ADP + phosphate + 2 H(+). It functions in the pathway purine metabolism; IMP biosynthesis via de novo pathway; 5-amino-1-(5-phospho-D-ribosyl)imidazole-4-carboxylate from 5-amino-1-(5-phospho-D-ribosyl)imidazole (N5-CAIR route): step 1/2. Functionally, catalyzes the ATP-dependent conversion of 5-aminoimidazole ribonucleotide (AIR) and HCO(3)(-) to N5-carboxyaminoimidazole ribonucleotide (N5-CAIR). The protein is N5-carboxyaminoimidazole ribonucleotide synthase of Synechocystis sp. (strain ATCC 27184 / PCC 6803 / Kazusa).